The following is a 103-amino-acid chain: CLAVATA3/ESR (CLE)-related protein 22 (103 aa).

The N-terminal stretch at 1 to 34 (MGNYYSRRKSRKHITTVALIILLLLLFLFLYAKA) is a signal peptide. Residues 37–103 (SSPNIHHHST…FTGPNPLHNR (67 aa)) form a disordered region. The span at 41 to 50 (IHHHSTHGSL) shows a compositional bias: basic residues. Residues 66-76 (NAASSRGSKYT) show a composition bias toward polar residues. The residue at position 97 (Pro97) is a Hydroxyproline. Pro97 carries an O-linked (Ara...) hydroxyproline glycan.

Belongs to the CLV3/ESR signal peptide family. In terms of processing, the O-glycosylation (arabinosylation) of the hydroxyproline Pro-97 enhances binding affinity of the CLE22p peptide for its receptor. As to expression, mostly expressed in stems and apex, and, to a lower extent, in seedlings, leaves, flowers and siliques.

It localises to the secreted. Its subcellular location is the extracellular space. Its function is as follows. Extracellular signal peptide that regulates cell fate. Represses root apical meristem maintenance. This chain is CLAVATA3/ESR (CLE)-related protein 22, found in Arabidopsis thaliana (Mouse-ear cress).